A 33-amino-acid chain; its full sequence is ATP synthase 27 kDa subunit, mitochondrial (33 aa).

The protein localises to the mitochondrion. Its subcellular location is the mitochondrion inner membrane. Its function is as follows. Mitochondrial membrane ATP synthase (F(1)F(0) ATP synthase or Complex V) produces ATP from ADP in the presence of a proton gradient across the membrane which is generated by electron transport complexes of the respiratory chain. F-type ATPases consist of two structural domains, F(1) - containing the extramembraneous catalytic core and F(0) - containing the membrane proton channel, linked together by a central stalk and a peripheral stalk. During catalysis, ATP synthesis in the catalytic domain of F(1) is coupled via a rotary mechanism of the central stalk subunits to proton translocation. Part of the complex F(0) domain. The sequence is that of ATP synthase 27 kDa subunit, mitochondrial from Solanum tuberosum (Potato).